Consider the following 267-residue polypeptide: Dolichol-phosphate mannosyltransferase (267 aa).

The residue at position 2 (serine 2) is an N-acetylserine. Residues 2–238 (SIEYSVIVPA…QQLKELYVFK (237 aa)) lie on the Cytoplasmic side of the membrane. Residues proline 10, tyrosine 12, glutamate 14, valine 42, aspartate 44, aspartate 95, alanine 96, aspartate 97, glutamine 99, and arginine 122 each coordinate GDP-alpha-D-mannose. Residues aspartate 97 and glutamine 99 each coordinate Mg(2+). Residues aspartate 97 and glutamine 99 each coordinate Mn(2+). Position 141 is a phosphoserine; by PKA (serine 141). Positions 183, 212, and 218 each coordinate GDP-alpha-D-mannose. The chain crosses the membrane as a helical; Anchor for type IV membrane protein span at residues 239 to 259 (FGANNLILFITFWSILFFYVC). Topologically, residues 260-267 (YQLYHLVF) are lumenal.

This sequence belongs to the glycosyltransferase 2 family. Interacts with the C-terminus of SAC1, thereby sequestering it to the endoplasmic reticulum in exponentially growing cells. Under nutrient limitation conditions, this interaction is rapidly abolished. Requires Mg(2+) as cofactor. Mn(2+) serves as cofactor. It depends on Ca(2+) as a cofactor.

It is found in the endoplasmic reticulum membrane. It carries out the reaction a di-trans,poly-cis-dolichyl phosphate + GDP-alpha-D-mannose = a di-trans,poly-cis-dolichyl beta-D-mannosyl phosphate + GDP. It functions in the pathway protein modification; protein glycosylation. Inhibited by acetylsalicylic acid (aspirin). Functionally, transfers mannose from GDP-mannose to dolichol monophosphate to form dolichol phosphate mannose (Dol-P-Man) which is the mannosyl donor in pathways leading to N-glycosylation, glycosyl phosphatidylinositol membrane anchoring, and O-mannosylation of proteins. The chain is Dolichol-phosphate mannosyltransferase from Saccharomyces cerevisiae (strain ATCC 204508 / S288c) (Baker's yeast).